The following is a 309-amino-acid chain: NAD-dependent protein deacylase sirtuin-5A, mitochondrial (309 aa).

The transit peptide at 1-35 (MILLTFHTRRLVSHAYCGLKPASQKKSIALEMTRP) directs the protein to the mitochondrion. Residues 36-306 (SSNLADFREA…PPALARHETE (271 aa)) enclose the Deacetylase sirtuin-type domain. 57–76 (GAGVSAESGVPTFRGAGGYW) is a binding site for NAD(+). Residues Tyr-101 and Arg-104 each coordinate substrate. 139-142 (QNID) is a binding site for NAD(+). The active-site Proton acceptor is the His-157. The Zn(2+) site is built by Cys-165, Cys-168, Cys-206, and Cys-211. Residues 248-250 (GTS), 274-276 (NME), and Cys-292 each bind NAD(+).

Belongs to the sirtuin family. Class III subfamily. The cofactor is Zn(2+).

It localises to the mitochondrion. Its subcellular location is the cytoplasm. The protein localises to the cytosol. The protein resides in the nucleus. The catalysed reaction is N(6)-malonyl-L-lysyl-[protein] + NAD(+) + H2O = 2''-O-malonyl-ADP-D-ribose + nicotinamide + L-lysyl-[protein]. The enzyme catalyses N(6)-succinyl-L-lysyl-[protein] + NAD(+) + H2O = 2''-O-succinyl-ADP-D-ribose + nicotinamide + L-lysyl-[protein]. It catalyses the reaction N(6)-glutaryl-L-lysyl-[protein] + NAD(+) + H2O = 2''-O-glutaryl-ADP-D-ribose + nicotinamide + L-lysyl-[protein]. In terms of biological role, NAD-dependent lysine demalonylase, desuccinylase and deglutarylase that specifically removes malonyl, succinyl and glutaryl groups on target proteins. Has weak NAD-dependent protein deacetylase activity; however this activity may not be physiologically relevant in vivo. This Xenopus laevis (African clawed frog) protein is NAD-dependent protein deacylase sirtuin-5A, mitochondrial (sirt5-a).